A 318-amino-acid chain; its full sequence is Bifunctional protein FolD 3 (318 aa).

Residues 173-175 (GRS) and I242 each bind NADP(+).

The protein belongs to the tetrahydrofolate dehydrogenase/cyclohydrolase family. As to quaternary structure, homodimer.

It catalyses the reaction (6R)-5,10-methylene-5,6,7,8-tetrahydrofolate + NADP(+) = (6R)-5,10-methenyltetrahydrofolate + NADPH. The catalysed reaction is (6R)-5,10-methenyltetrahydrofolate + H2O = (6R)-10-formyltetrahydrofolate + H(+). The protein operates within one-carbon metabolism; tetrahydrofolate interconversion. Functionally, catalyzes the oxidation of 5,10-methylenetetrahydrofolate to 5,10-methenyltetrahydrofolate and then the hydrolysis of 5,10-methenyltetrahydrofolate to 10-formyltetrahydrofolate. The chain is Bifunctional protein FolD 3 from Rubrobacter xylanophilus (strain DSM 9941 / JCM 11954 / NBRC 16129 / PRD-1).